The sequence spans 238 residues: 2-C-methyl-D-erythritol 4-phosphate cytidylyltransferase (238 aa).

The protein belongs to the IspD/TarI cytidylyltransferase family. IspD subfamily.

The enzyme catalyses 2-C-methyl-D-erythritol 4-phosphate + CTP + H(+) = 4-CDP-2-C-methyl-D-erythritol + diphosphate. The protein operates within isoprenoid biosynthesis; isopentenyl diphosphate biosynthesis via DXP pathway; isopentenyl diphosphate from 1-deoxy-D-xylulose 5-phosphate: step 2/6. In terms of biological role, catalyzes the formation of 4-diphosphocytidyl-2-C-methyl-D-erythritol from CTP and 2-C-methyl-D-erythritol 4-phosphate (MEP). In Paraburkholderia phytofirmans (strain DSM 17436 / LMG 22146 / PsJN) (Burkholderia phytofirmans), this protein is 2-C-methyl-D-erythritol 4-phosphate cytidylyltransferase.